The chain runs to 155 residues: Ribosomal RNA large subunit methyltransferase H (155 aa).

Residues G104 and 123–128 (LSRLTL) contribute to the S-adenosyl-L-methionine site.

It belongs to the RNA methyltransferase RlmH family. In terms of assembly, homodimer.

The protein localises to the cytoplasm. The catalysed reaction is pseudouridine(1915) in 23S rRNA + S-adenosyl-L-methionine = N(3)-methylpseudouridine(1915) in 23S rRNA + S-adenosyl-L-homocysteine + H(+). Its function is as follows. Specifically methylates the pseudouridine at position 1915 (m3Psi1915) in 23S rRNA. This Marinomonas sp. (strain MWYL1) protein is Ribosomal RNA large subunit methyltransferase H.